A 1189-amino-acid chain; its full sequence is Phosphatidylinositol 3,4,5-trisphosphate 5-phosphatase 1 (1189 aa).

Residues 5-101 (WNHGNITRSK…GLVTHLQYPV (97 aa)) enclose the SH2 domain. Over residues 103 to 117 (LEEEDTGDDPEEDTV) the composition is skewed to acidic residues. Residues 103–132 (LEEEDTGDDPEEDTVESVVSPPELPPRNIP) are disordered. Positions 124-129 (PELPPR) match the SH3-binding 1 motif. At Ser243 the chain carries Phosphoserine. Positions 870–906 (TERDESSGPKTLKSLTSHDPMKQWEVTSRAPPCSGSS) are disordered. The short motif at 912–915 (NPNY) is the NPXY motif 1 element. The residue at position 915 (Tyr915) is a Phosphotyrosine. Positions 922–1189 (GPPMPLHVKQ…PGPLGRTAMQ (268 aa)) are disordered. The span at 931 to 943 (QTLSPDQQPTAWS) shows a compositional bias: polar residues. At Ser934 the chain carries Phosphoserine. Tyr944 bears the Phosphotyrosine mark. Ser960 carries the post-translational modification Phosphoserine. A compositionally biased stretch (pro residues) spans 961–971 (PPTPPGQPPIS). Residue Thr963 is modified to Phosphothreonine. An SH3-binding 2 motif is present at residues 969–974 (PISPKK). The residue at position 971 (Ser971) is a Phosphoserine. The tract at residues 1016–1030 (MFENPLYGSLSSFPK) is interaction with DAB2. An NPXY motif 2 motif is present at residues 1019–1022 (NPLY). A Phosphotyrosine modification is found at Tyr1022. Residues 1033-1047 (PRKDQESPKMPRKEP) are compositionally biased toward basic and acidic residues. The short motif at 1040–1051 (PKMPRKEPPPCP) is the SH3-binding 3 element. The span at 1134-1145 (PPTPTPRPPLPV) shows a compositional bias: pro residues. Basic and acidic residues predominate over residues 1157–1177 (KGRDYRDNTELPHHGKHRPEE).

It belongs to the inositol 1,4,5-trisphosphate 5-phosphatase family. In terms of assembly, interacts with tyrosine phosphorylated form of SHC1. Interacts with tyrosine phosphorylated form of DOK1. Interacts with tyrosine phosphorylated form of DOK3. Interacts with tyrosine phosphorylated form of SLAMF1/CD150. Interacts with PTPN11 in response to IL-3. Interacts with receptor EPOR. Interacts with receptors MS4A2/FCER1B and FCER1G. Interacts with receptors FCGR2B and FCGR3. Interacts with receptor FCGR2A, leading to regulate gene expression during the phagocytic process. Interacts with GRB2. Interacts with PLCG1. Interacts with tyrosine kinases SRC and TEC. Interacts with c-Met/MET. Interacts with MILR1 (tyrosine-phosphorylated). Can weakly interact (via NPXY motif 2) with DAB2 (via PID domain); the interaction is impaired by tyrosine phosphorylation of the NPXY motif. Interacts with FCRL3 and FCRL6 (tyrosine phosphorylated form). Interacts (via SH2 domain) with tyrosine phosphorylated KLRC1 (via ITIM). Interacts with MPL/TPOR. Post-translationally, tyrosine phosphorylated by the members of the SRC family after exposure to a diverse array of extracellular stimuli such as cytokines, growth factors, antibodies, chemokines, integrin ligands and hypertonic and oxidative stress. Phosphorylated upon IgG receptor FCGR2B-binding. Specifically expressed in immune and hematopoietic cells. Expressed in bone marrow and blood cells. Levels vary considerably within this compartment. Present in at least 74% of immature CD34+ cells, whereas within the more mature population of CD33+ cells, it is present in only 10% of cells. Present in the majority of T-cells, while it is present in a minority of B-cells (at protein level).

It is found in the cytoplasm. It localises to the cell membrane. The protein localises to the membrane raft. The protein resides in the cytoskeleton. Its subcellular location is the membrane. It catalyses the reaction a 1,2-diacyl-sn-glycero-3-phospho-(1D-myo-inositol-3,4,5-trisphosphate) + H2O = a 1,2-diacyl-sn-glycero-3-phospho-(1D-myo-inositol-3,4-bisphosphate) + phosphate. It carries out the reaction 1D-myo-inositol 1,3,4,5-tetrakisphosphate + H2O = 1D-myo-inositol 1,3,4-trisphosphate + phosphate. The catalysed reaction is a 1,2-diacyl-sn-glycero-3-phospho-(1D-myo-inositol-4,5-bisphosphate) + H2O = a 1,2-diacyl-sn-glycero-3-phospho-(1D-myo-inositol 4-phosphate) + phosphate. Activated upon translocation to the sites of synthesis of PtdIns(3,4,5)P3 in the membrane. Functionally, phosphatidylinositol (PtdIns) phosphatase that specifically hydrolyzes the 5-phosphate of phosphatidylinositol-3,4,5-trisphosphate (PtdIns(3,4,5)P3) to produce PtdIns(3,4)P2, thereby negatively regulating the PI3K (phosphoinositide 3-kinase) pathways. Able also to hydrolyzes the 5-phosphate of phosphatidylinositol-4,5-bisphosphate (PtdIns(4,5)P3) and inositol 1,3,4,5-tetrakisphosphate. Acts as a negative regulator of B-cell antigen receptor signaling. Mediates signaling from the FC-gamma-RIIB receptor (FCGR2B), playing a central role in terminating signal transduction from activating immune/hematopoietic cell receptor systems. Acts as a negative regulator of myeloid cell proliferation/survival and chemotaxis, mast cell degranulation, immune cells homeostasis, integrin alpha-IIb/beta-3 signaling in platelets and JNK signaling in B-cells. Regulates proliferation of osteoclast precursors, macrophage programming, phagocytosis and activation and is required for endotoxin tolerance. Involved in the control of cell-cell junctions, CD32a signaling in neutrophils and modulation of EGF-induced phospholipase C activity. Key regulator of neutrophil migration, by governing the formation of the leading edge and polarization required for chemotaxis. Modulates FCGR3/CD16-mediated cytotoxicity in NK cells. Mediates the activin/TGF-beta-induced apoptosis through its Smad-dependent expression. This is Phosphatidylinositol 3,4,5-trisphosphate 5-phosphatase 1 (INPP5D) from Homo sapiens (Human).